The primary structure comprises 311 residues: Aspartate carbamoyltransferase catalytic subunit (311 aa).

2 residues coordinate carbamoyl phosphate: Arg57 and Thr58. Residue Lys86 coordinates L-aspartate. Carbamoyl phosphate contacts are provided by Arg107, His135, and Gln138. 2 residues coordinate L-aspartate: Arg168 and Arg230. Carbamoyl phosphate-binding residues include Leu269 and Pro270.

This sequence belongs to the aspartate/ornithine carbamoyltransferase superfamily. ATCase family. As to quaternary structure, heterooligomer of catalytic and regulatory chains.

It catalyses the reaction carbamoyl phosphate + L-aspartate = N-carbamoyl-L-aspartate + phosphate + H(+). Its pathway is pyrimidine metabolism; UMP biosynthesis via de novo pathway; (S)-dihydroorotate from bicarbonate: step 2/3. Functionally, catalyzes the condensation of carbamoyl phosphate and aspartate to form carbamoyl aspartate and inorganic phosphate, the committed step in the de novo pyrimidine nucleotide biosynthesis pathway. The polypeptide is Aspartate carbamoyltransferase catalytic subunit (Staphylothermus marinus (strain ATCC 43588 / DSM 3639 / JCM 9404 / F1)).